The chain runs to 379 residues: cAMP-dependent protein kinase type I-alpha regulatory subunit (379 aa).

An N-acetylmethionine modification is found at methionine 1. Positions 1-134 (MASSSTSSEE…ALAKAIEKNV (134 aa)) are dimerization and phosphorylation. Residues 63–93 (QMVSQQKSSSRSDSREDEVSPPMNPVVKGRR) form a disordered region. Residues 94–98 (RRGAI) carry the Pseudophosphorylation motif motif. Residues 135-252 (LFAH…SKVS), glutamate 200, arginine 209, 253-379 (ILES…SLSV), glutamate 324, and arginine 333 each bind 3',5'-cyclic AMP.

Belongs to the cAMP-dependent kinase regulatory chain family. In terms of assembly, the inactive holoenzyme is composed of two regulatory chains and two catalytic chains. Activation by cAMP releases the two active catalytic monomers and the regulatory dimer. Interacts with PRKACA and PRKACB. Interacts with PRRC1; resulting in PKA activation. In terms of processing, the pseudophosphorylation site binds to the substrate-binding region of the catalytic chain, resulting in the inhibition of its activity.

The protein resides in the cell membrane. Functionally, regulatory subunit of the cAMP-dependent protein kinases involved in cAMP signaling in cells. This is cAMP-dependent protein kinase type I-alpha regulatory subunit (prkar1aa) from Danio rerio (Zebrafish).